A 1405-amino-acid polypeptide reads, in one-letter code: DNA-directed RNA polymerase subunit beta' (1405 aa).

Residues Cys-65, Cys-67, Cys-80, and Cys-83 each coordinate Zn(2+). 3 residues coordinate Mg(2+): Asp-468, Asp-470, and Asp-472. The Zn(2+) site is built by Cys-811, Cys-885, Cys-892, and Cys-895.

This sequence belongs to the RNA polymerase beta' chain family. As to quaternary structure, the RNAP catalytic core consists of 2 alpha, 1 beta, 1 beta' and 1 omega subunit. When a sigma factor is associated with the core the holoenzyme is formed, which can initiate transcription. The cofactor is Mg(2+). Zn(2+) is required as a cofactor.

It catalyses the reaction RNA(n) + a ribonucleoside 5'-triphosphate = RNA(n+1) + diphosphate. DNA-dependent RNA polymerase catalyzes the transcription of DNA into RNA using the four ribonucleoside triphosphates as substrates. This Azobacteroides pseudotrichonymphae genomovar. CFP2 protein is DNA-directed RNA polymerase subunit beta'.